The chain runs to 308 residues: Acetaldehyde dehydrogenase 2 (308 aa).

9–12 contributes to the NAD(+) binding site; sequence SGNI. Cys127 serves as the catalytic Acyl-thioester intermediate. NAD(+) contacts are provided by residues 158 to 166 and Asn286; that span reads SAGPGTRAN.

It belongs to the acetaldehyde dehydrogenase family.

It carries out the reaction acetaldehyde + NAD(+) + CoA = acetyl-CoA + NADH + H(+). This is Acetaldehyde dehydrogenase 2 from Parafrankia sp. (strain EAN1pec).